We begin with the raw amino-acid sequence, 371 residues long: Histidinol-phosphate aminotransferase (371 aa).

Lysine 228 carries the N6-(pyridoxal phosphate)lysine modification.

It belongs to the class-II pyridoxal-phosphate-dependent aminotransferase family. Histidinol-phosphate aminotransferase subfamily. Pyridoxal 5'-phosphate serves as cofactor.

The catalysed reaction is L-histidinol phosphate + 2-oxoglutarate = 3-(imidazol-4-yl)-2-oxopropyl phosphate + L-glutamate. The protein operates within amino-acid biosynthesis; L-histidine biosynthesis; L-histidine from 5-phospho-alpha-D-ribose 1-diphosphate: step 7/9. The protein is Histidinol-phosphate aminotransferase of Methanococcus maripaludis (strain C5 / ATCC BAA-1333).